Reading from the N-terminus, the 40-residue chain is Photosystem II reaction center protein L (40 aa).

Residues 19–39 (SLFLGLLLVFVLGILFSSYFF) form a helical membrane-spanning segment.

The protein belongs to the PsbL family. As to quaternary structure, PSII is composed of 1 copy each of membrane proteins PsbA, PsbB, PsbC, PsbD, PsbE, PsbF, PsbH, PsbI, PsbJ, PsbK, PsbL, PsbM, PsbT, PsbX, PsbY, PsbZ, Psb30/Ycf12, peripheral proteins PsbO, CyanoQ (PsbQ), PsbU, PsbV and a large number of cofactors. It forms dimeric complexes.

Its subcellular location is the cellular thylakoid membrane. Functionally, one of the components of the core complex of photosystem II (PSII). PSII is a light-driven water:plastoquinone oxidoreductase that uses light energy to abstract electrons from H(2)O, generating O(2) and a proton gradient subsequently used for ATP formation. It consists of a core antenna complex that captures photons, and an electron transfer chain that converts photonic excitation into a charge separation. This subunit is found at the monomer-monomer interface and is required for correct PSII assembly and/or dimerization. This is Photosystem II reaction center protein L from Synechococcus elongatus (strain ATCC 33912 / PCC 7942 / FACHB-805) (Anacystis nidulans R2).